We begin with the raw amino-acid sequence, 289 residues long: Oxaloacetate decarboxylase 1 (289 aa).

A substrate-binding site is contributed by Ser-50. Position 88 (Asp-88) interacts with Mg(2+). Substrate is bound by residues Arg-159 and His-235.

This sequence belongs to the isocitrate lyase/PEP mutase superfamily. Oxaloacetate decarboxylase family. As to quaternary structure, homotetramer; dimer of dimers. The cofactor is Mg(2+).

It catalyses the reaction oxaloacetate + H(+) = pyruvate + CO2. Catalyzes the decarboxylation of oxaloacetate into pyruvate. Seems to play a role in maintaining cellular concentrations of bicarbonate and pyruvate. The polypeptide is Oxaloacetate decarboxylase 1 (Pseudomonas putida (strain W619)).